Consider the following 257-residue polypeptide: Imidazole glycerol phosphate synthase subunit HisF (257 aa).

Catalysis depends on residues Asp-11 and Asp-130.

It belongs to the HisA/HisF family. In terms of assembly, heterodimer of HisH and HisF.

It localises to the cytoplasm. The catalysed reaction is 5-[(5-phospho-1-deoxy-D-ribulos-1-ylimino)methylamino]-1-(5-phospho-beta-D-ribosyl)imidazole-4-carboxamide + L-glutamine = D-erythro-1-(imidazol-4-yl)glycerol 3-phosphate + 5-amino-1-(5-phospho-beta-D-ribosyl)imidazole-4-carboxamide + L-glutamate + H(+). The protein operates within amino-acid biosynthesis; L-histidine biosynthesis; L-histidine from 5-phospho-alpha-D-ribose 1-diphosphate: step 5/9. In terms of biological role, IGPS catalyzes the conversion of PRFAR and glutamine to IGP, AICAR and glutamate. The HisF subunit catalyzes the cyclization activity that produces IGP and AICAR from PRFAR using the ammonia provided by the HisH subunit. This Xylella fastidiosa (strain M23) protein is Imidazole glycerol phosphate synthase subunit HisF.